A 326-amino-acid chain; its full sequence is Polycomb complex protein BMI-1 (326 aa).

Residues 18 to 57 (CVLCGGYFIDATTIIECLHSFCKTCIVRYLETSKYCPICD) form an RING-type zinc finger. The Nuclear localization signal motif lies at 81 to 95 (KLVPGLFKNEMKRRR). The segment at 162-182 (RYLRCPAAMTVMHLRKFLRSK) is interaction with PHC2. The interaction with E4F1 stretch occupies residues 164 to 228 (LRCPAAMTVM…GPLPLKYRVR (65 aa)). Residues 236 to 326 (ISHQRDGLTN…VNGSSATSSG (91 aa)) form a disordered region. The span at 266–278 (PSTSSCLPSPSTP) shows a compositional bias: low complexity. The segment covering 279–309 (VQSPHPQFPHISSTMNGTSNSPSGNHQSSFA) has biased composition (polar residues). Positions 315-326 (SSVNGSSATSSG) are enriched in low complexity.

In terms of assembly, component of a PRC1-like complex. Identified in a PRC1-like HPRC-H complex with CBX2, CBX4, CBX8, PHC1, PHC2, PHC3 RING1 and RNF2. Interacts with RNF2/RING2. Interacts with RING1. Part of a complex that contains RNF2, UB2D3 and BMI1, where RNF2 and BMI1 form a tight heterodimer, and UB2D3 interacts only with RNF2. The complex composed of RNF2, UB2D3 and BMI1 binds nucleosomes, and has activity only with nucleosomal histone H2A. Interacts with CBX7 and CBX8. Interacts with SPOP. Part of a complex consisting of BMI1, CUL3 and SPOP. Interacts with E4F1. Interacts with PHC2. Interacts with zinc finger protein ZNF277. May be part of a complex including at least ZNF277, BMI1 and RNF2/RING2. Post-translationally, monoubiquitinated. May be polyubiquitinated; which does not lead to proteasomal degradation.

The protein resides in the nucleus. Its subcellular location is the cytoplasm. Component of a Polycomb group (PcG) multiprotein PRC1-like complex, a complex class required to maintain the transcriptionally repressive state of many genes, including Hox genes, throughout development. PcG PRC1 complex acts via chromatin remodeling and modification of histones; it mediates monoubiquitination of histone H2A 'Lys-119', rendering chromatin heritably changed in its expressibility. The complex composed of RNF2, UB2D3 and BMI1 binds nucleosomes, and has activity only with nucleosomal histone H2A. In the PRC1-like complex, regulates the E3 ubiquitin-protein ligase activity of RNF2/RING2. This Homo sapiens (Human) protein is Polycomb complex protein BMI-1 (BMI1).